A 259-amino-acid chain; its full sequence is Ribosomal RNA small subunit methyltransferase J (259 aa).

S-adenosyl-L-methionine contacts are provided by residues 101 to 102 (RD), 117 to 118 (ER), 153 to 154 (SS), and aspartate 176.

This sequence belongs to the methyltransferase superfamily. RsmJ family.

The protein resides in the cytoplasm. The catalysed reaction is guanosine(1516) in 16S rRNA + S-adenosyl-L-methionine = N(2)-methylguanosine(1516) in 16S rRNA + S-adenosyl-L-homocysteine + H(+). Its function is as follows. Specifically methylates the guanosine in position 1516 of 16S rRNA. In Vibrio vulnificus (strain CMCP6), this protein is Ribosomal RNA small subunit methyltransferase J.